We begin with the raw amino-acid sequence, 153 residues long: Arginine repressor (153 aa).

Belongs to the ArgR family.

It localises to the cytoplasm. The protein operates within amino-acid biosynthesis; L-arginine biosynthesis [regulation]. Functionally, regulates arginine biosynthesis genes. This Clostridium tetani (strain Massachusetts / E88) protein is Arginine repressor.